We begin with the raw amino-acid sequence, 745 residues long: Double-stranded RNA-specific editase B2 (745 aa).

2 disordered regions span residues 1–35 (MASV…RKDK) and 50–104 (SPGT…PLEE). The span at 20 to 34 (CKSKRRRRRRSKRKD) shows a compositional bias: basic residues. The R-domain (ssRNA-binding) stretch occupies residues 23–35 (KRRRRRRSKRKDK). DRBM domains lie at 125–191 (TPKN…SFVQ) and 283–347 (NPVV…ALFD). The A to I editase domain occupies 414 to 741 (VLSSGTKCIS…VRKPPEQDQF (328 aa)). A Zn(2+)-binding site is contributed by His-438. The Proton donor role is filled by Glu-440. The Zn(2+) site is built by Cys-496 and Cys-561.

In terms of tissue distribution, brain specific.

The protein localises to the nucleus. Its function is as follows. Lacks editing activity. It prevents the binding of other ADAR enzymes to targets in vitro, and decreases the efficiency of these enzymes. Capable of binding to dsRNA but also to ssRNA. This chain is Double-stranded RNA-specific editase B2 (Adarb2), found in Mus musculus (Mouse).